We begin with the raw amino-acid sequence, 267 residues long: Malonyl-[acyl-carrier protein] O-methyltransferase (267 aa).

This sequence belongs to the methyltransferase superfamily.

It carries out the reaction malonyl-[ACP] + S-adenosyl-L-methionine = malonyl-[ACP] methyl ester + S-adenosyl-L-homocysteine. Its pathway is cofactor biosynthesis; biotin biosynthesis. Functionally, converts the free carboxyl group of a malonyl-thioester to its methyl ester by transfer of a methyl group from S-adenosyl-L-methionine (SAM). It allows to synthesize pimeloyl-ACP via the fatty acid synthetic pathway. This chain is Malonyl-[acyl-carrier protein] O-methyltransferase, found in Yersinia pestis.